A 255-amino-acid polypeptide reads, in one-letter code: Ribonuclease PH (255 aa).

Phosphate-binding positions include arginine 86 and 124-126 (GTR).

It belongs to the RNase PH family. Homohexameric ring arranged as a trimer of dimers.

It catalyses the reaction tRNA(n+1) + phosphate = tRNA(n) + a ribonucleoside 5'-diphosphate. In terms of biological role, phosphorolytic 3'-5' exoribonuclease that plays an important role in tRNA 3'-end maturation. Removes nucleotide residues following the 3'-CCA terminus of tRNAs; can also add nucleotides to the ends of RNA molecules by using nucleoside diphosphates as substrates, but this may not be physiologically important. Probably plays a role in initiation of 16S rRNA degradation (leading to ribosome degradation) during starvation. This Hydrogenobaculum sp. (strain Y04AAS1) protein is Ribonuclease PH.